Consider the following 107-residue polypeptide: Cysteine proteinase inhibitor (107 aa).

A Cystatin domain is found at 18 to 107 (GGVQDAPAGR…KQLQEFKPAA (90 aa)). Residues 63–67 (QVVAG) carry the Secondary area of contact motif.

Belongs to the cystatin family. Phytocystatin subfamily. In terms of tissue distribution, expressed in embryos, developing endosperms, leaves, roots, flowers and pollen grains.

In terms of biological role, inhibits papain, ficin, cathepsin B and, to a lesser extent, chymopapain, but is inactive against bromelain. Inhibits the growth of pathogenic fungi. Regulated by the DOF transcription factors SAD (activator) and BPBF (repressor). This Hordeum vulgare (Barley) protein is Cysteine proteinase inhibitor (ICY).